A 1091-amino-acid polypeptide reads, in one-letter code: LRR receptor-like serine/threonine-protein kinase RGI3 (1091 aa).

The N-terminal stretch at 1 to 24 is a signal peptide; the sequence is MPPNIYRLSFFSSLLCFFFIPCFS. Over 25-703 the chain is Extracellular; it reads LDQQGQALLS…TTRNSSVVRL (679 aa). Residues 33–56 form an LRR 1 repeat; sequence LSWKSQLNISGDAFSSWHVADTSP. Residue N40 is glycosylated (N-linked (GlcNAc...) asparagine). A disulfide bridge connects residues C57 and C64. LRR repeat units lie at residues 67 to 91, 92 to 115, 116 to 140, 142 to 166, 168 to 188, 190 to 213, 214 to 237, 239 to 261, 262 to 285, 287 to 309, 311 to 332, 333 to 357, 359 to 383, 385 to 405, 406 to 429, 431 to 453, 454 to 477, 478 to 501, 503 to 524, 525 to 548, 549 to 572, 574 to 596, 598 to 620, 621 to 644, 645 to 668, and 669 to 690; these read RGEV…SLRS, LKSL…EIGD, FTEL…IFRL, KLKT…NLSG, VELM…IGEL, NLQV…IGNC, ENLV…IGNL, RVQT…IGYC, TELQ…IGGL, KLQS…LGNC, ELWL…SFGK, LENL…LTNC, KLTH…NLRS, TMFF…LSQC, RELQ…IFGL, NLTK…IGNC, TNLY…IGNL, KNLN…ISGC, SLEF…TTLP, KSLK…IGLL, TELT…ISTC, SLQL…LGQI, SLAI…RFSD, LKNL…LTDL, QNLV…PFFR, and RLPL…ISTR. N-linked (GlcNAc...) asparagine glycosylation is present at N104. N-linked (GlcNAc...) asparagine glycosylation occurs at N163. 5 short sequence motifs (small peptide recognition) span residues 173–174, 195–198, 218–223, Y246, and 268–270; these read FD, RAGG, MLGLAE, and YLY. 2 consecutive short sequence motifs (small peptide recognition) follow at residues 316–319 and 338–340; these read DFSE and ELQ. A glycan (N-linked (GlcNAc...) asparagine) is linked at N356. Short sequence motifs (small peptide recognition) lie at residues 386 to 390 and 412 to 415; these read MFFAW and DLSY. N431 carries an N-linked (GlcNAc...) asparagine glycan. A Small peptide recognition motif is present at residues 434–438; that stretch reads KLLLL. An N-linked (GlcNAc...) asparagine glycan is attached at N452. A Small peptide recognition motif is present at residues 458–460; that stretch reads RLR. N-linked (GlcNAc...) asparagine glycosylation occurs at N604. N-linked (GlcNAc...) asparagine glycosylation occurs at N651. N697 carries an N-linked (GlcNAc...) asparagine glycan. The chain crosses the membrane as a helical span at residues 704–724; sequence TILILVVVTAVLVLMAVYTLV. Residues 725–1091 lie on the Cytoplasmic side of the membrane; the sequence is RARAAGKQLL…CSFAFSDDSV (367 aa). The region spanning 760–1046 is the Protein kinase domain; the sequence is LTSANVIGTG…MLTEIRHIDV (287 aa). ATP contacts are provided by residues 766–774 and K788; that span reads IGTGSSGVV. Phosphotyrosine occurs at positions 831 and 870. D883 serves as the catalytic Proton acceptor. Y933 is modified (phosphotyrosine).

This sequence belongs to the protein kinase superfamily. Ser/Thr protein kinase family. In terms of assembly, binds to RGF peptides such as RGF1, GLV5/CLEL1/RGF2, GLV7/CLEL3/RGF3, GLV3/RGF4, GLV10/CLEL7/RGF5 and RGF10/CLELN; these interactions trigger the formation of heterodimers with SERK1, SERK2 or BAK1/SERK3 via LRR regions. Phosphorylated and ubiquitinated upon interaction with RGF1, thus leading to activation a subsequent degradation. In terms of processing, autophosphorylated. In terms of tissue distribution, expressed in roots.

The protein localises to the cell membrane. The catalysed reaction is L-seryl-[protein] + ATP = O-phospho-L-seryl-[protein] + ADP + H(+). It catalyses the reaction L-threonyl-[protein] + ATP = O-phospho-L-threonyl-[protein] + ADP + H(+). Its function is as follows. Together with RGI1, RGI2, RGI4 and RGI5, acts as a receptor of RGF peptides (e.g. RGF1, GLV5/CLEL1/RGF2, GLV7/CLEL3/RGF3, GLV3/RGF4, GLV10/CLEL7/RGF5 and RGF10/CLELN), peptide hormones which maintain the postembryonic root stem cell niche by regulating the expression levels and patterns of the transcription factor PLETHORA (PLT, e.g. PLT1 and PLT2). Links RGF peptides signal with their downstream components. The sequence is that of LRR receptor-like serine/threonine-protein kinase RGI3 from Arabidopsis thaliana (Mouse-ear cress).